An 89-amino-acid polypeptide reads, in one-letter code: Small ribosomal subunit protein uS15 (89 aa).

Belongs to the universal ribosomal protein uS15 family. Part of the 30S ribosomal subunit. Forms a bridge to the 50S subunit in the 70S ribosome, contacting the 23S rRNA.

Functionally, one of the primary rRNA binding proteins, it binds directly to 16S rRNA where it helps nucleate assembly of the platform of the 30S subunit by binding and bridging several RNA helices of the 16S rRNA. Its function is as follows. Forms an intersubunit bridge (bridge B4) with the 23S rRNA of the 50S subunit in the ribosome. In Streptococcus pyogenes serotype M2 (strain MGAS10270), this protein is Small ribosomal subunit protein uS15.